Here is a 396-residue protein sequence, read N- to C-terminus: Exodeoxyribonuclease 7 large subunit (396 aa).

Belongs to the XseA family. Heterooligomer composed of large and small subunits.

It localises to the cytoplasm. The catalysed reaction is Exonucleolytic cleavage in either 5'- to 3'- or 3'- to 5'-direction to yield nucleoside 5'-phosphates.. In terms of biological role, bidirectionally degrades single-stranded DNA into large acid-insoluble oligonucleotides, which are then degraded further into small acid-soluble oligonucleotides. This chain is Exodeoxyribonuclease 7 large subunit, found in Clostridium tetani (strain Massachusetts / E88).